We begin with the raw amino-acid sequence, 288 residues long: Phosphatidylserine decarboxylase proenzyme (288 aa).

Residues D92, H149, and S254 each act as charge relay system; for autoendoproteolytic cleavage activity in the active site. Catalysis depends on S254, which acts as the Schiff-base intermediate with substrate; via pyruvic acid; for decarboxylase activity. S254 is modified (pyruvic acid (Ser); by autocatalysis).

It belongs to the phosphatidylserine decarboxylase family. PSD-B subfamily. Prokaryotic type I sub-subfamily. As to quaternary structure, heterodimer of a large membrane-associated beta subunit and a small pyruvoyl-containing alpha subunit. Requires pyruvate as cofactor. Is synthesized initially as an inactive proenzyme. Formation of the active enzyme involves a self-maturation process in which the active site pyruvoyl group is generated from an internal serine residue via an autocatalytic post-translational modification. Two non-identical subunits are generated from the proenzyme in this reaction, and the pyruvate is formed at the N-terminus of the alpha chain, which is derived from the carboxyl end of the proenzyme. The autoendoproteolytic cleavage occurs by a canonical serine protease mechanism, in which the side chain hydroxyl group of the serine supplies its oxygen atom to form the C-terminus of the beta chain, while the remainder of the serine residue undergoes an oxidative deamination to produce ammonia and the pyruvoyl prosthetic group on the alpha chain. During this reaction, the Ser that is part of the protease active site of the proenzyme becomes the pyruvoyl prosthetic group, which constitutes an essential element of the active site of the mature decarboxylase.

The protein localises to the cell membrane. It catalyses the reaction a 1,2-diacyl-sn-glycero-3-phospho-L-serine + H(+) = a 1,2-diacyl-sn-glycero-3-phosphoethanolamine + CO2. It participates in phospholipid metabolism; phosphatidylethanolamine biosynthesis; phosphatidylethanolamine from CDP-diacylglycerol: step 2/2. Functionally, catalyzes the formation of phosphatidylethanolamine (PtdEtn) from phosphatidylserine (PtdSer). The protein is Phosphatidylserine decarboxylase proenzyme of Bordetella petrii (strain ATCC BAA-461 / DSM 12804 / CCUG 43448).